The primary structure comprises 97 residues: Putative septation protein SpoVG (97 aa).

The protein belongs to the SpoVG family.

Its function is as follows. Could be involved in septation. This Borrelia garinii subsp. bavariensis (strain ATCC BAA-2496 / DSM 23469 / PBi) (Borreliella bavariensis) protein is Putative septation protein SpoVG.